A 905-amino-acid polypeptide reads, in one-letter code: Gamma-tubulin complex component 2 (905 aa).

Tyr-83 bears the Phosphotyrosine mark. Positions 877–905 are disordered; the sequence is AERSQKAAPQVPVPRGPSAPAPRVAIPAQ. Residues 887–896 are compositionally biased toward pro residues; sequence VPVPRGPSAP.

Belongs to the TUBGCP family. Component of the gamma-tubulin ring complex (gTuRC) consisting of TUBGCP2, TUBGCP3, TUBGCP4, TUBGCP5 and TUBGCP6 and gamma-tubulin TUBG1 or TUBG2. TUBGCP2, TUBGCP3, TUBGCP4, TUBGCP5 and TUBGCP6 assemble in a 5:5:2:1:1 stoichiometry; each is associated with a gamma-tubulin, thereby arranging 14 gamma-tubulins in a helical manner. Gamma-tubulin at the first position is blocked by TUBGCP3 at the last position, allowing 13 protafilaments to grow into a microtubule. The gTuRC (via TUBGCP3 and TUBGCP6) interacts with ACTB and MZT1; the interactions form a luminal bridge that stabilizes the initial structure during complex assembly. The gTuRC (via TUBGCP2) interacts with MZT2A/MZT2B and CDK5RAP2 (via CM1 motif); the interactions play a role in gTuRC activation. Interacts with ATF5; the ATF5:PCNT:polyglutamylated tubulin (PGT) tripartite unites the mother centriole and the pericentriolar material (PCM) in the centrosome.

The protein localises to the cytoplasm. It is found in the cytoskeleton. Its subcellular location is the microtubule organizing center. It localises to the centrosome. Functionally, component of the gamma-tubulin ring complex (gTuRC) which mediates microtubule nucleation. The gTuRC regulates the minus-end nucleation of alpha-beta tubulin heterodimers that grow into microtubule protafilaments, a critical step in centrosome duplication and spindle formation. Plays a role in neuronal migration. The polypeptide is Gamma-tubulin complex component 2 (Tubgcp2) (Mus musculus (Mouse)).